The primary structure comprises 359 residues: MERINVNLGDRSYPISIGAELFNTPALFASAISAGRRVVVVSNETVAPLYAAQVMATIRALECEVSLLELPDGEQYKTLETFNQIMTFLLQGNYGRDVVMVALGGGVIGDVVGFAAASYQRGVDFVQVPTTLLSQVDSSVGGKTAVNHPLGKNMIGAFYQPKAVVIDNQCLKTLPAREFASGMAEVIKYGIIADYEFFVWLEQNIEKLQALDNEALCYAIGRCCQIKADVVASDEKESGVRALLNLGHTFGHAIEAEMGYGNWLHGEAVAAGTVFAAKTAHEQGLLSEEDVIRITRLHERAQLPISKPTSMDYDSFIKHMMRDKKVLSGQLRLVLPTSIGTAEVVSDVPHDVLRRVINA.

NAD(+) is bound by residues 72 to 77 (DGEQYK), 106 to 110 (GVIGD), 130 to 131 (TT), lysine 143, lysine 152, and 170 to 173 (CLKT). Zn(2+) is bound by residues glutamate 185, histidine 248, and histidine 265.

It belongs to the sugar phosphate cyclases superfamily. Dehydroquinate synthase family. Requires Co(2+) as cofactor. The cofactor is Zn(2+). It depends on NAD(+) as a cofactor.

It is found in the cytoplasm. It catalyses the reaction 7-phospho-2-dehydro-3-deoxy-D-arabino-heptonate = 3-dehydroquinate + phosphate. The protein operates within metabolic intermediate biosynthesis; chorismate biosynthesis; chorismate from D-erythrose 4-phosphate and phosphoenolpyruvate: step 2/7. Catalyzes the conversion of 3-deoxy-D-arabino-heptulosonate 7-phosphate (DAHP) to dehydroquinate (DHQ). The sequence is that of 3-dehydroquinate synthase from Photobacterium profundum (strain SS9).